The primary structure comprises 791 residues: Vezatin (791 aa).

2 helical membrane passes run 138 to 158 (IATP…ALAA) and 163 to 183 (SISS…FTVL). A coiled-coil region spans residues 435–464 (VRSLQLHLKALLNEVIILEDELEKLSSCKE). Residues 752-769 (GDEWDDDDDDNDNDDDNY) are compositionally biased toward acidic residues. The interval 752 to 791 (GDEWDDDDDDNDNDDDNYDQVKNVESHEKERNNVSLQLEE) is disordered. Over residues 773 to 783 (KNVESHEKERN) the composition is skewed to basic and acidic residues.

The protein belongs to the vezatin family. As to quaternary structure, interacts with myosin VIIa and the cadherin-catenins complex.

It localises to the cell membrane. Its subcellular location is the cell junction. It is found in the adherens junction. The protein resides in the nucleus. Functionally, plays a pivotal role in the establishment of adherens junctions and their maintenance in adult life. This chain is Vezatin (vezt), found in Xenopus tropicalis (Western clawed frog).